We begin with the raw amino-acid sequence, 315 residues long: MKHLVIATRGSKLALWQAEHIKSLIETEHAGKVDVSLKIIKTKGDIILDVPLAKVGGKGLFVKEIEEALLDGSADLAVHSMKDVPMELPEGLFLGCIPEREEPSDTLLSVRYASLDALPHGARVGTSSLRRQSQLLALRPDLDIISLRGNVDTRLRKLMDGEFDAIVMATAGLKRLGLAAPHHEVLAPPRFLPAVGQGALGIEFREDRADLRDMLAFLDHRPTRIRVEAERGFLAGLEGGCQVPIAGHAVMTGDDNFRIEGLVADLKGERVIRRTLEGTGANARNRGLELASQVLADGAAEILDEVYASGAADRQ.

C241 carries the S-(dipyrrolylmethanemethyl)cysteine modification.

The protein belongs to the HMBS family. In terms of assembly, monomer. The cofactor is dipyrromethane.

It catalyses the reaction 4 porphobilinogen + H2O = hydroxymethylbilane + 4 NH4(+). It participates in porphyrin-containing compound metabolism; protoporphyrin-IX biosynthesis; coproporphyrinogen-III from 5-aminolevulinate: step 2/4. Functionally, tetrapolymerization of the monopyrrole PBG into the hydroxymethylbilane pre-uroporphyrinogen in several discrete steps. This chain is Porphobilinogen deaminase, found in Nitratidesulfovibrio vulgaris (strain ATCC 29579 / DSM 644 / CCUG 34227 / NCIMB 8303 / VKM B-1760 / Hildenborough) (Desulfovibrio vulgaris).